A 520-amino-acid polypeptide reads, in one-letter code: Glycosyl hydrolase family 109 protein 5 (520 aa).

Residues Met1 to Ala27 form the signal peptide. Residues Met77–Arg78, Asp99, Trp147–His150, Glu167–Val168, and Asn196 each bind NAD(+). Substrate-binding positions include Tyr225, Arg248, Tyr260–His263, and Tyr338. NAD(+) is bound at residue Tyr260.

This sequence belongs to the Gfo/Idh/MocA family. Glycosyl hydrolase 109 subfamily. Requires NAD(+) as cofactor.

Its function is as follows. Glycosidase. The chain is Glycosyl hydrolase family 109 protein 5 from Phocaeicola vulgatus (strain ATCC 8482 / DSM 1447 / JCM 5826 / CCUG 4940 / NBRC 14291 / NCTC 11154) (Bacteroides vulgatus).